The sequence spans 359 residues: Squamosa promoter-binding-like protein 13A (359 aa).

Residues 75-94 (AKPEGSRSSSSKRTRGNGVG) are disordered. The SBP-type zinc finger occupies 98 to 175 (MPICLVDGCD…DGHNRRRRKP (78 aa)). Cysteine 101, cysteine 106, cysteine 123, histidine 126, cysteine 142, cysteine 145, histidine 149, and cysteine 161 together coordinate Zn(2+). A Bipartite nuclear localization signal motif is present at residues 158–174 (KRSCRKRLDGHNRRRRK).

Requires Zn(2+) as cofactor.

The protein resides in the nucleus. In terms of biological role, trans-acting factor that binds specifically to the consensus nucleotide sequence 5'-TNCGTACAA-3'. The protein is Squamosa promoter-binding-like protein 13A (SPL13A) of Arabidopsis thaliana (Mouse-ear cress).